The chain runs to 271 residues: Oxidation resistance protein 1 (271 aa).

The tract at residues 15–41 is disordered; it reads WSNSEESDRDPRHLKSSDDLSNYTGSR. Residues 23-32 are compositionally biased toward basic and acidic residues; it reads RDPRHLKSSD. A TLDc domain is found at 63-271; sequence RLLHPEMCDE…IMGLEVWRVG (209 aa).

This sequence belongs to the OXR1 family.

The protein localises to the mitochondrion. Its function is as follows. May be involved in protection from oxidative damage. This Candida glabrata (strain ATCC 2001 / BCRC 20586 / JCM 3761 / NBRC 0622 / NRRL Y-65 / CBS 138) (Yeast) protein is Oxidation resistance protein 1 (OXR1).